Here is a 331-residue protein sequence, read N- to C-terminus: Aflatoxin B1 aldehyde reductase member 4 (331 aa).

NADP(+) is bound at residue aspartate 44. The active-site Proton donor is the tyrosine 49. Serine 85 bears the Phosphoserine mark. Histidine 113 serves as a coordination point for substrate. Residues 143–144 (SN), glutamine 169, 198–208 (NPLAGGLLTGK), and arginine 222 each bind NADP(+). Residue tyrosine 232 participates in substrate binding. 290 to 298 (SSLEQLEQN) contacts NADP(+).

It belongs to the aldo/keto reductase family. Aldo/keto reductase 2 subfamily. In terms of tissue distribution, mainly expressed in uterus.

In terms of biological role, can reduce the dialdehyde protein-binding form of aflatoxin B1 (AFB1) to the non-binding AFB1 dialcohol. May be involved in protection of liver against the toxic and carcinogenic effects of AFB1, a potent hepatocarcinogen. The polypeptide is Aflatoxin B1 aldehyde reductase member 4 (AKR7L) (Homo sapiens (Human)).